The sequence spans 115 residues: Regulator of ribonuclease activity B (115 aa).

This sequence belongs to the RraB family. Interacts with the C-terminal region of Rne.

The protein localises to the cytoplasm. In terms of biological role, globally modulates RNA abundance by binding to RNase E (Rne) and regulating its endonucleolytic activity. Can modulate Rne action in a substrate-dependent manner by altering the composition of the degradosome. The sequence is that of Regulator of ribonuclease activity B from Aeromonas hydrophila subsp. hydrophila (strain ATCC 7966 / DSM 30187 / BCRC 13018 / CCUG 14551 / JCM 1027 / KCTC 2358 / NCIMB 9240 / NCTC 8049).